Reading from the N-terminus, the 198-residue chain is MKLYSLSVLYKGENKVHLLKSAYDVSSFSFFQRSSVQEFMTFTSQLIVERSDKGSRSSVKEQEYLCHVYVRNDSLAGVVIADNEYPPRVCFTLLEKVLEEFSTQVDRIDWPSGSPATIQYNALDSYLSKYQNPRDADPMSKVQAELDETKIVLHNTMESLLQRGEKLDDLVSKSEVLGTQSKAFYKTARKQNSCCDIM.

The Longin domain occupies 8–127; the sequence is VLYKGENKVH…IQYNALDSYL (120 aa). A v-SNARE coiled-coil homology domain is found at 138 to 198; sequence PMSKVQAELD…RKQNSCCDIM (61 aa). Residue Cys194 is the site of S-palmitoyl cysteine attachment. Cys195 is subject to Cysteine methyl ester. Cys195 carries S-farnesyl cysteine lipidation. Positions 196–198 are cleaved as a propeptide — removed in mature form; it reads DIM.

The protein belongs to the synaptobrevin family. Palmitoylated; catalyzes its own palmitoylation. Palmitoylation is required for Golgi targeting. Post-translationally, farnesylation is required for Golgi targeting.

Its subcellular location is the cytoplasm. The protein resides in the cytosol. It is found in the cytoplasmic vesicle membrane. It localises to the golgi apparatus membrane. Functionally, vesicular soluble NSF attachment protein receptor (v-SNARE) mediating vesicle docking and fusion to a specific acceptor cellular compartment. Functions in endoplasmic reticulum to Golgi transport; as part of a SNARE complex composed of GOSR1, GOSR2 and STX5. Functions in early/recycling endosome to TGN transport; as part of a SNARE complex composed of BET1L, GOSR1 and STX5. Has a S-palmitoyl transferase activity. This is Synaptobrevin homolog YKT6-B (ykt6-b) from Xenopus laevis (African clawed frog).